We begin with the raw amino-acid sequence, 490 residues long: Membrane-bound lytic murein transglycosylase F (490 aa).

The first 32 residues, 1-32, serve as a signal peptide directing secretion; sequence MFALTAYRLRCAAWLLATGIFLLLAGCSEAKA. A non-LT domain region spans residues 33–269; sequence PTALERVQKE…RLKDRYYGHV (237 aa). The tract at residues 270–490 is LT domain; it reads DVLGYVGAYT…PDDDEGDGKL (221 aa). Residue Glu-316 is part of the active site. Residues 467-490 are disordered; that stretch reads AESGLHLPGVNKTRPDDDEGDGKL.

This sequence in the N-terminal section; belongs to the bacterial solute-binding protein 3 family. It in the C-terminal section; belongs to the transglycosylase Slt family.

Its subcellular location is the cell outer membrane. The enzyme catalyses Exolytic cleavage of the (1-&gt;4)-beta-glycosidic linkage between N-acetylmuramic acid (MurNAc) and N-acetylglucosamine (GlcNAc) residues in peptidoglycan, from either the reducing or the non-reducing ends of the peptidoglycan chains, with concomitant formation of a 1,6-anhydrobond in the MurNAc residue.. Murein-degrading enzyme that degrades murein glycan strands and insoluble, high-molecular weight murein sacculi, with the concomitant formation of a 1,6-anhydromuramoyl product. Lytic transglycosylases (LTs) play an integral role in the metabolism of the peptidoglycan (PG) sacculus. Their lytic action creates space within the PG sacculus to allow for its expansion as well as for the insertion of various structures such as secretion systems and flagella. The sequence is that of Membrane-bound lytic murein transglycosylase F from Pseudomonas paraeruginosa (strain DSM 24068 / PA7) (Pseudomonas aeruginosa (strain PA7)).